Consider the following 70-residue polypeptide: Putative peptide YY-3 (70 aa).

A signal peptide spans 1–23 (MVSVCRPWPAVAIALLALLVCLG).

It belongs to the NPY family.

It is found in the secreted. The polypeptide is Putative peptide YY-3 (PYY3) (Homo sapiens (Human)).